We begin with the raw amino-acid sequence, 416 residues long: MDRINTSAAPPTSPDWERLRTDFPLLQRHVHGKPLIYFDNANTAQKPQAVITATDTFYRRHNANISRAVHTLGTEATEAYEATRTALATLLNAPTHELVLCSGTTFAINLIAYSWALPRLRAGDVILVSRMEHHANIVPWQLIAERTGARIQVADILPNGTLDLDALHTLMTPQVKLLAITHVSNVLGTVNPIHDICRQARQRGITTVVDGSQAAPHRHIDIPAIGCDFYAITGHKLYGPTGTGALWARREHLHIMPPFLGGGEMIKEVSFDGTLFNTPPHKFEAGTPNIAGFIGLRAAVDYVRRIGIEQIETRETELLAHLTEELQKIDGMRLFGTAPNKAAVVSFMIEGTHAHDLATLLDLEGVAIRSGQHCAHPLLQYYGVTATCRASLAFYNTHEEIERFIAALLKVRKLLG.

Lys-236 carries the post-translational modification N6-(pyridoxal phosphate)lysine. Residue Cys-374 is the Cysteine persulfide intermediate of the active site.

The protein belongs to the class-V pyridoxal-phosphate-dependent aminotransferase family. Csd subfamily. Requires pyridoxal 5'-phosphate as cofactor.

The enzyme catalyses (sulfur carrier)-H + L-cysteine = (sulfur carrier)-SH + L-alanine. Its function is as follows. Catalyzes the removal of elemental sulfur and selenium atoms from L-cysteine, L-cystine, L-selenocysteine, and L-selenocystine to produce L-alanine. This is Probable cysteine desulfurase (csd) from Xylella fastidiosa (strain 9a5c).